The chain runs to 860 residues: MLWKRWTLAVTIVVLQLAAVLLFARGFLPSRVLLPGYTESRVSTEAPFQKAIIMVVDAFRSDFAFSDQSNCPQLHKRINSGGAIPFTAHSTPPTVTLPRIKGLTTGSTPNFLDAVLNIAESDNSSTLANQDSWLAQASRDGRKIHMFGDDTWIKLFPGMFDDCEGTASFFVSDYTEVDNNVTRHIDTQLDQKTEWDVLILHYLGLDHIGHKTGPESPFMPAKQKEMDDIFDKLYNSCDDDTVLILLGDHGMNEVGNHGGSSAGETSAAMVFASPKFETAQLTETAETSPLPWTDTYKYHSRMDQTDLVPTLTALLGLNTPKNNLGVLVSQMLGLWSPEDQLNVLKNNADQMVQILQGQASRESDAKEVYELYDTLNSNPSVKDYYNFLYEAQSYLTHASSNYNTNDMLGGIGLGLLSTILALTVFSALTLAVQGLKRLYLIILLVYFISVFGSSTVEEEHQIWYWITSGWMAFLYISGSRNKFGDGFNWMFVQVFVRMMISWNQTGQKFTKKDDIVTWLSKDGNHPVLWILILVTYGVAFNKVWRYGFSKVESKLAFLLTLITTFASVGFKITQAWEAGEVVPAPLLYLMGLPGTLNEVNARMAGLARFAFSTIAAGSLYRVLSLAGTDKVNLIRDLHAFLTLFLITQSRIQNIPLFMVYYFLEIFLRKATNRSFIFSSRDIYQTEALFQKLVLVLSVSTLLLEQVSFFSMGNSNSMASIDLSNAYNGVTLYQIEFVGVLTFVSNWIGPLYWSTAGLSFLLEDHVRNAIFAKIAEKNNDVKLTTKLVQQALTLRVYVVLAFSSVAISAVMITCFFLREHLFIWTVFSPKLLYQFVWTVLQFALVDVILSSIFVVLVYRSV.

Residues Asn123 and Asn180 are each glycosylated (N-linked (GlcNAc...) asparagine). The next 8 membrane-spanning stretches (helical) occupy residues 408–428 (LGGI…FSAL), 438–458 (LYLI…TVEE), 459–479 (EHQI…ISGS), 487–506 (FNWM…NQTG), 524–544 (NHPV…NKVW), 555–575 (LAFL…ITQA), 576–596 (WEAG…PGTL), and 639–659 (AFLT…LFMV). Asn672 carries N-linked (GlcNAc...) asparagine glycosylation. The next 4 membrane-spanning stretches (helical) occupy residues 692 to 712 (LVLV…FSMG), 736 to 756 (FVGV…STAG), 795 to 815 (VYVV…TCFF), and 834 to 854 (FVWT…IFVV).

This sequence belongs to the PIGG/PIGN/PIGO family. PIGG subfamily.

It localises to the endoplasmic reticulum membrane. The protein operates within glycolipid biosynthesis; glycosylphosphatidylinositol-anchor biosynthesis. In terms of biological role, ethanolamine phosphate transferase involved in glycosylphosphatidylinositol-anchor biosynthesis. Transfers ethanolamine phosphate to the GPI second mannose. This chain is GPI ethanolamine phosphate transferase 2 (LAS21), found in Yarrowia lipolytica (strain CLIB 122 / E 150) (Yeast).